A 618-amino-acid chain; its full sequence is Dihydroxy-acid dehydratase (618 aa).

D81 contacts Mg(2+). C122 is a [2Fe-2S] cluster binding site. Mg(2+) contacts are provided by D123 and K124. K124 carries the post-translational modification N6-carboxylysine. C195 contacts [2Fe-2S] cluster. E492 provides a ligand contact to Mg(2+). Catalysis depends on S518, which acts as the Proton acceptor.

The protein belongs to the IlvD/Edd family. In terms of assembly, homodimer. The cofactor is [2Fe-2S] cluster. Mg(2+) is required as a cofactor.

The enzyme catalyses (2R)-2,3-dihydroxy-3-methylbutanoate = 3-methyl-2-oxobutanoate + H2O. The catalysed reaction is (2R,3R)-2,3-dihydroxy-3-methylpentanoate = (S)-3-methyl-2-oxopentanoate + H2O. It functions in the pathway amino-acid biosynthesis; L-isoleucine biosynthesis; L-isoleucine from 2-oxobutanoate: step 3/4. Its pathway is amino-acid biosynthesis; L-valine biosynthesis; L-valine from pyruvate: step 3/4. Its function is as follows. Functions in the biosynthesis of branched-chain amino acids. Catalyzes the dehydration of (2R,3R)-2,3-dihydroxy-3-methylpentanoate (2,3-dihydroxy-3-methylvalerate) into 2-oxo-3-methylpentanoate (2-oxo-3-methylvalerate) and of (2R)-2,3-dihydroxy-3-methylbutanoate (2,3-dihydroxyisovalerate) into 2-oxo-3-methylbutanoate (2-oxoisovalerate), the penultimate precursor to L-isoleucine and L-valine, respectively. The polypeptide is Dihydroxy-acid dehydratase (Zymomonas mobilis subsp. mobilis (strain ATCC 31821 / ZM4 / CP4)).